The chain runs to 418 residues: Tyrosine--tRNA ligase (418 aa).

An L-tyrosine-binding site is contributed by tyrosine 34. A 'HIGH' region motif is present at residues 39–48 (PTGDSMHIGH). Tyrosine 166 and glutamine 170 together coordinate L-tyrosine. A 'KMSKS' region motif is present at residues 228 to 232 (KFGKT). Lysine 231 is a binding site for ATP. Residues 350 to 417 (TNIVELLTET…KKNYFLAKVK (68 aa)) form the S4 RNA-binding domain.

Belongs to the class-I aminoacyl-tRNA synthetase family. TyrS type 1 subfamily. As to quaternary structure, homodimer.

It localises to the cytoplasm. It carries out the reaction tRNA(Tyr) + L-tyrosine + ATP = L-tyrosyl-tRNA(Tyr) + AMP + diphosphate + H(+). Functionally, catalyzes the attachment of tyrosine to tRNA(Tyr) in a two-step reaction: tyrosine is first activated by ATP to form Tyr-AMP and then transferred to the acceptor end of tRNA(Tyr). This is Tyrosine--tRNA ligase from Levilactobacillus brevis (Lactobacillus brevis).